The following is a 438-amino-acid chain: Transposon Ty2-C Gag polyprotein (438 aa).

3 stretches are compositionally biased toward polar residues: residues 1–11 (MESQQLHQNPR), 19–39 (ASVT…SASN), and 49–60 (KVNSQQETTPGT). Disordered stretches follow at residues 1–88 (MESQ…YQQH), 365–397 (NVSR…AKAH), and 419–438 (SSQY…TERI). An RNA-binding region spans residues 295–397 (ENNINVSDRL…SSKPRAAKAH (103 aa)). The span at 369–382 (TSPNTTNTKVTTRN) shows a compositional bias: low complexity.

In terms of assembly, homotrimer.

The protein localises to the cytoplasm. Capsid protein (CA) is the structural component of the virus-like particle (VLP), forming the shell that encapsulates the retrotransposons dimeric RNA genome. The particles are assembled from trimer-clustered units and there are holes in the capsid shells that allow for the diffusion of macromolecules. CA also has nucleocapsid-like chaperone activity, promoting primer tRNA(i)-Met annealing to the multipartite primer-binding site (PBS), dimerization of Ty2 RNA and initiation of reverse transcription. This chain is Transposon Ty2-C Gag polyprotein (TY2A-C), found in Saccharomyces cerevisiae (strain ATCC 204508 / S288c) (Baker's yeast).